A 211-amino-acid polypeptide reads, in one-letter code: Ribosomal RNA large subunit methyltransferase E (211 aa).

The S-adenosyl-L-methionine site is built by G60, W62, D80, D96, and D121. K161 acts as the Proton acceptor in catalysis.

It belongs to the class I-like SAM-binding methyltransferase superfamily. RNA methyltransferase RlmE family.

The protein resides in the cytoplasm. The catalysed reaction is uridine(2552) in 23S rRNA + S-adenosyl-L-methionine = 2'-O-methyluridine(2552) in 23S rRNA + S-adenosyl-L-homocysteine + H(+). In terms of biological role, specifically methylates the uridine in position 2552 of 23S rRNA at the 2'-O position of the ribose in the fully assembled 50S ribosomal subunit. In Cellvibrio japonicus (strain Ueda107) (Pseudomonas fluorescens subsp. cellulosa), this protein is Ribosomal RNA large subunit methyltransferase E.